Here is a 373-residue protein sequence, read N- to C-terminus: Phosphoserine aminotransferase (373 aa).

Arginine 47 provides a ligand contact to L-glutamate. Residues alanine 81 to arginine 82, tryptophan 113, threonine 164, aspartate 185, and glutamine 208 contribute to the pyridoxal 5'-phosphate site. Lysine 209 is subject to N6-(pyridoxal phosphate)lysine. A pyridoxal 5'-phosphate-binding site is contributed by asparagine 250 to threonine 251.

Belongs to the class-V pyridoxal-phosphate-dependent aminotransferase family. SerC subfamily. As to quaternary structure, homodimer. The cofactor is pyridoxal 5'-phosphate.

Its subcellular location is the cytoplasm. It catalyses the reaction O-phospho-L-serine + 2-oxoglutarate = 3-phosphooxypyruvate + L-glutamate. The catalysed reaction is 4-(phosphooxy)-L-threonine + 2-oxoglutarate = (R)-3-hydroxy-2-oxo-4-phosphooxybutanoate + L-glutamate. Its pathway is amino-acid biosynthesis; L-serine biosynthesis; L-serine from 3-phospho-D-glycerate: step 2/3. The protein operates within cofactor biosynthesis; pyridoxine 5'-phosphate biosynthesis; pyridoxine 5'-phosphate from D-erythrose 4-phosphate: step 3/5. Functionally, catalyzes the reversible conversion of 3-phosphohydroxypyruvate to phosphoserine and of 3-hydroxy-2-oxo-4-phosphonooxybutanoate to phosphohydroxythreonine. This Buchnera aphidicola subsp. Baizongia pistaciae (strain Bp) protein is Phosphoserine aminotransferase.